The following is a 452-amino-acid chain: Disintegrin and metalloproteinase domain-containing protein 11 (452 aa).

The region spanning 1–120 (RRHHSPLLVS…GGGSCLFNKP (120 aa)) is the Peptidase M12B domain. At 1–417 (RRHHSPLLVS…EKYKGPSGTN (417 aa)) the chain is on the extracellular side. 3 disulfide bridges follow: Cys31–Cys115, Cys74–Cys99, and Cys76–Cys83. The Disintegrin domain occupies 126–214 (PPSCGNGFIE…ACPANLHKQD (89 aa)). Asn149 carries an N-linked (GlcNAc...) asparagine glycan. Cys186 and Cys206 form a disulfide bridge. Asn288 and Asn356 each carry an N-linked (GlcNAc...) asparagine glycan. Intrachain disulfides connect Cys360–Cys375, Cys369–Cys381, and Cys383–Cys392. Residues 360-416 (CPGSWNGVICSDHGVCSNEGKCICHPEWTGKDCSVYDPLPVPKPTGVVEKYKGPSGT) enclose the EGF-like domain. The chain crosses the membrane as a helical span at residues 418–438 (IIIGSIAGAVLIAAIVLGGTG). Over 439–452 (WGFKNIRRGRSGGG) the chain is Cytoplasmic.

The precursor is cleaved by a furin endopeptidase. In terms of tissue distribution, detected in testis and barely expressed in heart and muscle. Not detectable in liver.

The protein resides in the presynaptic cell membrane. It is found in the perikaryon. Its subcellular location is the cell projection. It localises to the axon. Its function is as follows. Probable ligand for integrin in the brain. This is a non-catalytic metalloprotease-like protein. The sequence is that of Disintegrin and metalloproteinase domain-containing protein 11 (adam11) from Xenopus laevis (African clawed frog).